The sequence spans 73 residues: Putative membrane protein insertion efficiency factor (73 aa).

This sequence belongs to the UPF0161 family.

The protein localises to the cell inner membrane. Its function is as follows. Could be involved in insertion of integral membrane proteins into the membrane. The sequence is that of Putative membrane protein insertion efficiency factor from Dinoroseobacter shibae (strain DSM 16493 / NCIMB 14021 / DFL 12).